Consider the following 446-residue polypeptide: Saccharopine dehydrogenase [NADP(+), L-glutamate-forming] (446 aa).

NADP(+) is bound by residues 10 to 13 (SGFV), 33 to 35 (CRT), 54 to 55 (DV), I75, 97 to 98 (SS), 124 to 126 (LDP), and S174. L-saccharopine-binding positions include 98–99 (SY) and D125. L-saccharopine is bound by residues R223 and 244 to 246 (TLR).

This sequence belongs to the saccharopine dehydrogenase family. Interacts with TRM112.

It catalyses the reaction L-saccharopine + NADP(+) + H2O = (S)-2-amino-6-oxohexanoate + L-glutamate + NADPH + H(+). It functions in the pathway amino-acid biosynthesis; L-lysine biosynthesis via AAA pathway; L-lysine from L-alpha-aminoadipate (fungal route): step 2/3. The sequence is that of Saccharopine dehydrogenase [NADP(+), L-glutamate-forming] (LYS9) from Saccharomyces cerevisiae (strain ATCC 204508 / S288c) (Baker's yeast).